Reading from the N-terminus, the 292-residue chain is MVIKVPATSANLGPGFDALGLSLNLFNIITINESPIFCISLNGEGSQNLNLKKHNMFISIFNEITRKFDTKLPNFRFVFENNIPFSRGLGSSSAVIVGAIASAYKICGIKIDKNKILNEALVYENHPDNIAPAAFGGFVSSVIYKNSVITQKSEIGEDIKAVVVIPDKQMQTRKSRTMLPKNFTIKECVTNLSHAAFLTSCFVKKDYKNLKFGCIDVMHEELRMQNLPELFEVRKIAYENGALMSSLSGSGSSFLNIVYKDDAKNLAKILSAKFPKFTVKILDFDNGGFAFE.

84 to 94 (PFSRGLGSSSA) is an ATP binding site.

It belongs to the GHMP kinase family. Homoserine kinase subfamily.

It is found in the cytoplasm. The enzyme catalyses L-homoserine + ATP = O-phospho-L-homoserine + ADP + H(+). The protein operates within amino-acid biosynthesis; L-threonine biosynthesis; L-threonine from L-aspartate: step 4/5. Its function is as follows. Catalyzes the ATP-dependent phosphorylation of L-homoserine to L-homoserine phosphate. This Campylobacter hominis (strain ATCC BAA-381 / DSM 21671 / CCUG 45161 / LMG 19568 / NCTC 13146 / CH001A) protein is Homoserine kinase.